A 606-amino-acid chain; its full sequence is NADH-ubiquinone oxidoreductase chain 5 (606 aa).

15 consecutive transmembrane segments (helical) span residues 3–23 (VINL…LPII), 38–58 (ITKT…LLFI), 87–107 (FFSL…MEFS), 124–144 (LLLF…LQLF), 180–200 (IGDM…NSWE), 216–236 (LLGL…HPWL), 244–264 (TPVS…FTLI), 276–296 (IQTS…ICAL), 304–323 (IIAL…IGIN), 328–350 (AFIH…GSII), 369–389 (MPIT…MPFL), 404–424 (MSYI…MTAS), 460–480 (LILG…PHTT), 483–503 (MTMP…GFTV), and 586–606 (LMKL…LIAL).

Belongs to the complex I subunit 5 family. As to quaternary structure, core subunit of respiratory chain NADH dehydrogenase (Complex I) which is composed of 45 different subunits.

The protein localises to the mitochondrion inner membrane. It carries out the reaction a ubiquinone + NADH + 5 H(+)(in) = a ubiquinol + NAD(+) + 4 H(+)(out). Its function is as follows. Core subunit of the mitochondrial membrane respiratory chain NADH dehydrogenase (Complex I) which catalyzes electron transfer from NADH through the respiratory chain, using ubiquinone as an electron acceptor. Essential for the catalytic activity and assembly of complex I. In Loxodonta africana (African elephant), this protein is NADH-ubiquinone oxidoreductase chain 5 (MT-ND5).